Consider the following 189-residue polypeptide: Adenylate kinase homolog MTH_1663 (189 aa).

Glycine 12–threonine 20 contacts ATP.

The protein belongs to the archaeal adenylate kinase family.

In Methanothermobacter thermautotrophicus (strain ATCC 29096 / DSM 1053 / JCM 10044 / NBRC 100330 / Delta H) (Methanobacterium thermoautotrophicum), this protein is Adenylate kinase homolog MTH_1663.